Consider the following 790-residue polypeptide: Protein SEY1 (790 aa).

The Cytoplasmic segment spans residues 1 to 692 (MELSEGELSH…KRSIVQHITQ (692 aa)). In terms of domain architecture, GB1/RHD3-type G spans 55–284 (GNNYHIISVF…VNNELFKPEY (230 aa)). Residue 65 to 72 (GSQSTGKS) coordinates GTP. A helical membrane pass occupies residues 693–713 (IPYYIYLIILVLGWNEFMAII). Residues 714-716 (RNP) lie on the Lumenal side of the membrane. A helical membrane pass occupies residues 717–737 (LFFSLSIVLGATVYVLYYLNL). The Cytoplasmic segment spans residues 738–790 (LKPAMLVAQRTMDEVIIMAKTKLREVLIDDHEVTGRQLNKIAGGKENIELDDM).

This sequence belongs to the TRAFAC class dynamin-like GTPase superfamily. GB1/RHD3 GTPase family. RHD3 subfamily.

The protein resides in the endoplasmic reticulum membrane. Cooperates with the reticulon proteins and tubule-shaping DP1 family proteins to generate and maintain the structure of the tubular endoplasmic reticulum network. Has GTPase activity, which is required for its function in ER organization. This chain is Protein SEY1, found in Candida dubliniensis (strain CD36 / ATCC MYA-646 / CBS 7987 / NCPF 3949 / NRRL Y-17841) (Yeast).